The sequence spans 1414 residues: DNA-directed RNA polymerase subunit beta' (1414 aa).

Residues Cys72, Cys74, Cys87, and Cys90 each coordinate Zn(2+). Residues Asp463, Asp465, and Asp467 each contribute to the Mg(2+) site. Cys811, Cys885, Cys892, and Cys895 together coordinate Zn(2+).

The protein belongs to the RNA polymerase beta' chain family. As to quaternary structure, the RNAP catalytic core consists of 2 alpha, 1 beta, 1 beta' and 1 omega subunit. When a sigma factor is associated with the core the holoenzyme is formed, which can initiate transcription. Mg(2+) serves as cofactor. It depends on Zn(2+) as a cofactor.

The enzyme catalyses RNA(n) + a ribonucleoside 5'-triphosphate = RNA(n+1) + diphosphate. Functionally, DNA-dependent RNA polymerase catalyzes the transcription of DNA into RNA using the four ribonucleoside triphosphates as substrates. This Roseobacter denitrificans (strain ATCC 33942 / OCh 114) (Erythrobacter sp. (strain OCh 114)) protein is DNA-directed RNA polymerase subunit beta'.